Consider the following 593-residue polypeptide: MATEGKNPINMNSMSSSLARTGQWVFSQDIPTDVVVEVGEANFSLHKFMLVAKSNYIRKLIMESKDSDVTRINLSDIPGGPEIFEKAAKFCYGVNFEITVQNVAALHCAAEFLQMTDKYCDNNLAGRTQDFLSQVALSSLSGAIVVLKSCEILLPISRDLGIVRRCVDVVGAKACNEAMFPCRTPPNWWTEELCILDVDFFSDVVSSMKQRGVKPSSLASAIITYTEKSLRDLVRDHSGRGVKYSDPGDNESDERSQQRDLVQSIVSLLPSDKGLFPVNFLCSLLRCAVFLDTSLTCKNELEKRISVVLEHVSVDDLLIPSFTYDGERLLDLDSVRRIISAFVEKEKNVGVFNGGDFNRGVCSVSLQRVAKTVDSYLAEIATYGDLTISKFNAIANLVPKSARKSDDDLYRAIDIFLKAHPNLDEIEREKVCSSMDPLKLSYDARLHASQNKRLPVNIVLHALYYDQLKLRSGVAEQEERAVVVLPEALKTRSQLQADTTLAKENEALRSELMKMKMYVSDMQKNKNGAGASSSNSSSLVSSKKSKHTFFSSVSKKLGKLNPFKNGSKDTSHIDEDLGGVDITKPRRRRFSIS.

The region spanning 32 to 100 is the BTB domain; the sequence is TDVVVEVGEA…CYGVNFEITV (69 aa). An NPH3 domain is found at 187 to 469; that stretch reads NWWTEELCIL…LHALYYDQLK (283 aa). Phosphotyrosine is present on Tyr410.

This sequence belongs to the NPH3 family. In terms of assembly, interacts with RPT3 and PHOT1. As to expression, expressed in hypocotyls, guard cells and mesophyll cells.

Its pathway is protein modification; protein ubiquitination. May act as a substrate-specific adapter of an E3 ubiquitin-protein ligase complex (CUL3-RBX1-BTB) which mediates the ubiquitination and subsequent proteasomal degradation of target proteins. Signal transducer of the phototropic response and photo-induced movements. Necessary for root phototropism. Involved in hypocotyl phototropism under high rate but not under low rate light. Regulates stomata opening. Seems to be not involved in chloroplast accumulation and translocation. This Arabidopsis thaliana (Mouse-ear cress) protein is Root phototropism protein 2 (RPT2).